A 344-amino-acid chain; its full sequence is L-rhamnose-proton symporter (344 aa).

A run of 10 helical transmembrane segments spans residues 4-24 (AITMGIFWHLIGAASAACFYA), 38-58 (WSVGGIVSWLILPWAISATLL), 68-88 (FSASTLLPVFLFGAMWGIGNI), 101-121 (MGIGIAIGITLIVGTLMTPII), 131-151 (TQGGQMTLLGVLVAVIGVGIV), 175-195 (LLLAVMCGIFSAGMSFAMNAA), 214-234 (LPSYVVIMGGGALVNLGFCFI), 259-279 (LLLSALGGLMWYLQFFFYAWG), 290-310 (MSWMLHMSFYVLCGGVVGLVL), and 323-343 (VLSLGCVVIIIAANIVGLGMA).

This sequence belongs to the L-rhamnose transporter (TC 2.A.7.6) family.

Its subcellular location is the cell inner membrane. The enzyme catalyses L-rhamnopyranose(in) + H(+)(in) = L-rhamnopyranose(out) + H(+)(out). Functionally, uptake of L-rhamnose across the cytoplasmic membrane with the concomitant transport of protons into the cell (symport system). In Klebsiella pneumoniae subsp. pneumoniae (strain ATCC 700721 / MGH 78578), this protein is L-rhamnose-proton symporter.